Reading from the N-terminus, the 278-residue chain is MNSQKVQALTTVSKLSPIDKVVKGRNIPFSMPGDRVIMLKISSLFKFGREDKESDSKFDLVPTDCGICMVKTQLNQDEQKRTTFNDGKVIEIITYEQMKDILPMIKQAIHEFYSWRRGLMDTSTLEARNEWKPVSQLDFRRCNSNLIFYISILILSEYIIEIPIEYLTVSYGGYNFNNIRTGEWFNTDDFNNYQKVIKSGDVCDLFLINDTGEYKYINAITHVTKTNMIFSFNMQVSRPPQLNTTMKVRQTLSENKKQKSSSTSPETDSDMSEFFGDN.

The disordered stretch occupies residues 251 to 278 (TLSENKKQKSSSTSPETDSDMSEFFGDN).

This is an uncharacterized protein from Aedes pseudoscutellaris reovirus (isolate France) (ApRV).